The sequence spans 100 residues: Apolipoprotein C-II (100 aa).

The N-terminal stretch at 1-22 is a signal peptide; sequence MGSRFLLALFLVLLVLGYEVQG. The lipid binding stretch occupies residues 66–74; sequence SVDEKLRDM. Positions 78–100 are lipoprotein lipase cofactor; it reads SSAAVSTYAGIFTDQILTLLKGE.

The protein belongs to the apolipoprotein C2 family. Post-translationally, proapolipoprotein C-II is synthesized as a sialic acid containing glycoprotein which is subsequently desialylated prior to its proteolytic processing. In terms of processing, proapolipoprotein C-II, the major form found in plasma undergoes proteolytic cleavage of its N-terminal hexapeptide to generate the mature form apolipoprotein C-II, which occurs as the minor form in plasma.

The protein localises to the secreted. In terms of biological role, component of chylomicrons, very low-density lipoproteins (VLDL), low-density lipoproteins (LDL), and high-density lipoproteins (HDL) in plasma. Plays an important role in lipoprotein metabolism as an activator of lipoprotein lipase. This is Apolipoprotein C-II (Apoc2) from Neotoma lepida (Desert woodrat).